Here is a 317-residue protein sequence, read N- to C-terminus: Nucleoside ABC transporter permease protein NupC (317 aa).

10 helical membrane passes run 9–29, 35–55, 62–82, 98–118, 132–151, 155–172, 203–223, 225–245, 251–271, and 286–306; these read IIVA…IGGV, GIVN…SVVF, MFGS…GALF, IVSG…LLQV, GYWN…IFFT, LPGF…YVLF, AGVL…AQAI, GNFS…AMIF, IGAM…VVGG, and MAPY…AIAP.

This sequence belongs to the binding-protein-dependent transport system permease family. As to quaternary structure, the complex is composed of two ATP-binding proteins (NupA), two transmembrane proteins (NupB and NupC) and a solute-binding protein (BmpA).

It localises to the cell membrane. In terms of biological role, part of an ABC transporter complex involved in the uptake of all common nucleosides. Responsible for the translocation of the substrate across the membrane. The chain is Nucleoside ABC transporter permease protein NupC from Lactococcus lactis subsp. cremoris (strain MG1363).